The sequence spans 223 residues: Ubiquitin carboxyl-terminal hydrolase isozyme L1 (223 aa).

Met1 is modified (N-acetylmethionine). The UCH catalytic domain maps to Gln2 to Lys221. Residues Pro5–Pro10 are interaction with ubiquitin. Residue Cys90 is the Nucleophile of the active site. Ser125 is subject to Phosphoserine. His161 (proton donor) is an active-site residue. The segment at Glu211–Ala216 is interaction with ubiquitin. Cys220 carries the S-farnesyl cysteine lipid modification. Residues Lys221–Ala223 constitute a propeptide, removed in mature form.

Belongs to the peptidase C12 family. In terms of assembly, monomer. Homodimer. Interacts with COPS5 and SNCA. In terms of processing, O-glycosylated. In terms of tissue distribution, expressed in brain, where it is found in neurons but not in oligodendrocytes or astrocytes. Found in the ganglion cell layer and the inner nuclear layer of the retina (at protein level). Expressed in brain and testis. In the brain, expression is at its lowest in replaceable neurons of hippocampus and olfactory bulb. Highly expressed in senescent pituitary. In skeletal muscle, primarily expressed in oxidative muscle fibers.

The protein localises to the cytoplasm. The protein resides in the endoplasmic reticulum membrane. It carries out the reaction Thiol-dependent hydrolysis of ester, thioester, amide, peptide and isopeptide bonds formed by the C-terminal Gly of ubiquitin (a 76-residue protein attached to proteins as an intracellular targeting signal).. In terms of biological role, deubiquitinase that plays a role in the regulation of several processes such as maintenance of synaptic function, cardiac function, inflammatory response or osteoclastogenesis. Abrogates the ubiquitination of multiple proteins including WWTR1/TAZ, EGFR, HIF1A and beta-site amyloid precursor protein cleaving enzyme 1/BACE1. In addition, recognizes and hydrolyzes a peptide bond at the C-terminal glycine of ubiquitin to maintain a stable pool of monoubiquitin that is a key requirement for the ubiquitin-proteasome and the autophagy-lysosome pathways. Regulates amyloid precursor protein/APP processing by promoting BACE1 degradation resulting in decreased amyloid beta production. Plays a role in the immune response by regulating the ability of MHC I molecules to reach cross-presentation compartments competent for generating Ag-MHC I complexes. Mediates the 'Lys-48'-linked deubiquitination of the transcriptional coactivator WWTR1/TAZ leading to its stabilization and inhibition of osteoclastogenesis. Deubiquitinates and stabilizes epidermal growth factor receptor EGFR to prevent its degradation and to activate its downstream mediators. Modulates oxidative activity in skeletal muscle by regulating key mitochondrial oxidative proteins. Enhances the activity of hypoxia-inducible factor 1-alpha/HIF1A by abrogateing its VHL E3 ligase-mediated ubiquitination and consequently inhibiting its degradation. The sequence is that of Ubiquitin carboxyl-terminal hydrolase isozyme L1 (Uchl1) from Mus musculus (Mouse).